We begin with the raw amino-acid sequence, 168 residues long: MTSHLCCSNYSSPLPELLVCLHTEGSLTALLEVKAGQPLRVERSFEGYRLLSLAQKKQLGMQGAALSRPRLAWVREVQLYGNDELPWVQAQSLFPLSSLQGSARRLQQLKSTPIGYVLFKRSRTLPNQRFIKHTVDGWQRQTLYNWYGRPLLISETFLPQFCEKQLDI.

Positions 75, 114, and 155 each coordinate substrate.

The protein belongs to the UbiC family.

Its subcellular location is the cytoplasm. It catalyses the reaction chorismate = 4-hydroxybenzoate + pyruvate. It participates in cofactor biosynthesis; ubiquinone biosynthesis. In terms of biological role, removes the pyruvyl group from chorismate, with concomitant aromatization of the ring, to provide 4-hydroxybenzoate (4HB) for the ubiquinone pathway. The sequence is that of Probable chorismate pyruvate-lyase from Psychrobacter arcticus (strain DSM 17307 / VKM B-2377 / 273-4).